The primary structure comprises 800 residues: Probable inorganic carbon transporter subunit DabA (800 aa).

Zn(2+) is bound by residues Cys-329, Asp-331, His-488, and Cys-503.

It belongs to the inorganic carbon transporter (TC 9.A.2) DabA family. As to quaternary structure, forms a complex with DabB. The cofactor is Zn(2+).

The protein localises to the cell inner membrane. Its function is as follows. Part of an energy-coupled inorganic carbon pump. This Roseobacter denitrificans (strain ATCC 33942 / OCh 114) (Erythrobacter sp. (strain OCh 114)) protein is Probable inorganic carbon transporter subunit DabA.